Here is a 157-residue protein sequence, read N- to C-terminus: Probable calcium-binding protein CML15 (157 aa).

EF-hand domains follow at residues 3–38, 39–74, 78–113, and 114–149; these read DQIR…LGLK, PSGD…DLNE, INSE…MGQP, and LTYK…SAVD. Ca(2+) contacts are provided by Asp-16, Asp-18, Asp-20, Ser-22, Glu-27, Asp-52, Asn-54, Asn-56, Glu-63, Asp-91, Asp-93, Asn-95, Glu-102, Asp-127, Asn-129, Asp-131, and Glu-138.

Functionally, potential calcium sensor. The chain is Probable calcium-binding protein CML15 (CML15) from Arabidopsis thaliana (Mouse-ear cress).